The primary structure comprises 389 residues: Na(+)/H(+) antiporter NhaA (389 aa).

The next 11 membrane-spanning stretches (helical) occupy residues alanine 14–leucine 34, leucine 59–valine 79, serine 95–phenylalanine 115, alanine 124–leucine 144, valine 154–phenylalanine 174, threonine 177–leucine 197, leucine 213–isoleucine 233, proline 257–glycine 277, isoleucine 292–valine 312, isoleucine 328–leucine 348, and leucine 363–valine 383.

This sequence belongs to the NhaA Na(+)/H(+) (TC 2.A.33) antiporter family.

It is found in the cell inner membrane. It catalyses the reaction Na(+)(in) + 2 H(+)(out) = Na(+)(out) + 2 H(+)(in). In terms of biological role, na(+)/H(+) antiporter that extrudes sodium in exchange for external protons. The protein is Na(+)/H(+) antiporter NhaA of Shewanella baltica (strain OS223).